The following is a 145-amino-acid chain: Basic phospholipase A2 PC16 (145 aa).

Positions 1 to 21 are cleaved as a signal peptide; sequence MYPAHLLLLLAVCVSLLGASA. Positions 22–27 are excised as a propeptide; it reads IPPLPL. 7 cysteine pairs are disulfide-bonded: Cys38/Cys98, Cys54/Cys144, Cys56/Cys72, Cys71/Cys125, Cys78/Cys118, Cys87/Cys111, and Cys105/Cys116. Ca(2+)-binding residues include Tyr55, Gly57, and Gly59. Residue His75 is part of the active site. Asp76 provides a ligand contact to Ca(2+). Residue Asp119 is part of the active site.

It belongs to the phospholipase A2 family. Group I subfamily. D49 sub-subfamily. The cofactor is Ca(2+).

The protein localises to the secreted. The enzyme catalyses a 1,2-diacyl-sn-glycero-3-phosphocholine + H2O = a 1-acyl-sn-glycero-3-phosphocholine + a fatty acid + H(+). Functionally, PLA2 catalyzes the calcium-dependent hydrolysis of the 2-acyl groups in 3-sn-phosphoglycerides. The polypeptide is Basic phospholipase A2 PC16 (Laticauda laticaudata (Blue-ringed sea krait)).